A 582-amino-acid polypeptide reads, in one-letter code: Regulatory solute carrier protein family 1 member 1 (582 aa).

Disordered stretches follow at residues Met-1–Val-32, Lys-56–Leu-76, Glu-143–Asp-180, Val-303–Pro-325, Val-363–Arg-384, Leu-390–Gly-409, Ala-426–Arg-452, and Ser-483–Pro-529. Residues Ser-16–Val-32 are compositionally biased toward polar residues. A compositionally biased stretch (polar residues) spans Pro-148–Gln-179. A compositionally biased stretch (polar residues) spans Leu-390–Ser-408. Basic and acidic residues-rich tracts occupy residues Ser-438–Arg-452 and Pro-490–Glu-503. One can recognise a UBA domain in the interval Ile-536–Lys-576.

In terms of assembly, interacts with YRDC. As to expression, expressed in epithelial and subepithelial cells of small intestine.

The protein resides in the cell membrane. Its subcellular location is the nucleus. It is found in the golgi apparatus. The protein localises to the trans-Golgi network. Functionally, mediates transcriptional and post-transcriptional regulation of SLC5A1. Inhibits a dynamin and PKC-dependent exocytotic pathway of SLC5A1. Also involved in transcriptional regulation of SLC22A2. Exhibits glucose-dependent, short-term inhibition of SLC5A1 and SLC22A2 by inhibiting the release of vesicles from the trans-Golgi network. Regulates the expression of SLC5A1 in a tissue-specific manner and is specifically involved in its regulation in the small intestine. This Mus musculus (Mouse) protein is Regulatory solute carrier protein family 1 member 1 (Rsc1a1).